A 162-amino-acid polypeptide reads, in one-letter code: UPF0114 protein VCM66_0196 (162 aa).

4 helical membrane passes run 15–35 (IMAPIYLGLSLLLLALGIKFF), 53–73 (LILVALSLIDVSLVGGLIVMV), 109–126 (VSASIVAISSIHLLKVFM), and 136–156 (IKWYLLLHITFVVSAFAMGYL).

Belongs to the UPF0114 family.

The protein localises to the cell membrane. This chain is UPF0114 protein VCM66_0196, found in Vibrio cholerae serotype O1 (strain M66-2).